The following is a 350-amino-acid chain: E3 ubiquitin-protein ligase TRIM63 (350 aa).

The segment at 23-79 adopts an RING-type zinc-finger fold; it reads CPICLEMFTKPVVILPCQHNLCRKCANDIFQAANPYWTNRGGSVSMSGGRFRCPSCR. The interval 74-218 is interaction with TTN; the sequence is RCPSCRHEVI…LSQKFDTLYA (145 aa). The B box-type zinc-finger motif lies at 117–159; sequence GSHPMCKEHEDEKINIYCLTCEVPTCSLCKVFGAHQACEVAPL. Residues cysteine 122, histidine 125, cysteine 145, and histidine 151 each contribute to the Zn(2+) site. Residues 207–269 are a coiled coil; that stretch reads EELSQKFDTL…VETAIQSLDE (63 aa). The region spanning 267–325 is the COS domain; it reads LDEPGGATFLSSAKQLIKSNVEASKGCQLGKTEQGFENMDYFTLDLEHIAEALRAIDFG. The span at 325-344 shows a compositional bias: acidic residues; sequence GTDEEEEEFTEEEADEEEGV. The disordered stretch occupies residues 325-350; the sequence is GTDEEEEEFTEEEADEEEGVTTEGHQ.

As to quaternary structure, homodimer. Homooligomer and heterooligomer. Interacts with SUMO2, titin/TTN and GMEB1. Interacts with TRIM54 and probably with TRIM55. Interacts with TNNI3. Forms a ternary complex with RACK1 and PRKCE. Interacts with CKM.

Its subcellular location is the cytoplasm. The protein resides in the nucleus. It localises to the myofibril. It is found in the sarcomere. The protein localises to the m line. Its subcellular location is the z line. The enzyme catalyses S-ubiquitinyl-[E2 ubiquitin-conjugating enzyme]-L-cysteine + [acceptor protein]-L-lysine = [E2 ubiquitin-conjugating enzyme]-L-cysteine + N(6)-ubiquitinyl-[acceptor protein]-L-lysine.. Its pathway is protein modification; protein ubiquitination. Functionally, E3 ubiquitin ligase. Mediates the ubiquitination and subsequent proteasomal degradation of CKM, GMEB1 and HIBADH. Regulates the proteasomal degradation of muscle proteins under amino acid starvation, where muscle protein is catabolized to provide other organs with amino acids. Inhibits de novo skeletal muscle protein synthesis under amino acid starvation. Regulates proteasomal degradation of cardiac troponin I/TNNI3 and probably of other sarcomeric-associated proteins. May play a role in striated muscle atrophy and hypertrophy by regulating an anti-hypertrophic PKC-mediated signaling pathway. May regulate the organization of myofibrils through TTN in muscle cells. The protein is E3 ubiquitin-protein ligase TRIM63 (Trim63) of Mus musculus (Mouse).